The following is a 388-amino-acid chain: MNLHEYQAKELLASYGLPVQGGILAHNGEEAAAAYDKLGGKFAVVKAQVHAGGRGKAGGVKVVKSREEAKEVAESLIGTNLVTYQTDANGQPVNSVLVCEDMYPVQTELYLGAVVDRSTRRITFMASTEGGVEIEKVAAETPEKIFKVTVDPLVGLQPCQAREVAFQLGLKDKQINEFVKLMTGAYKAFVENDFALFEVNPLAVRENGALACVDGKIGIDSNALYRLPKIAELRDKSQENERELKASEFDLNYVALEGNIGCMVNGAGLAMATMDIIKLKGGQPANFLDVGGGATKDRVVEAFKLILEDKSVQGVLINIFGGIVRCDMIAEAIVAAVKEINVNVPVVVRLEGNNAELGAKILNESGLKLTSADGLNDAAEKIVAAVNA.

The ATP-grasp domain maps to 9 to 245 (KELLASYGLP…KSQENERELK (237 aa)). ATP is bound by residues lysine 46, 53–55 (GRG), glutamate 100, tyrosine 103, and glutamate 108. The Mg(2+) site is built by asparagine 200 and aspartate 214. Residues asparagine 265 and 322–324 (GIV) contribute to the substrate site.

It belongs to the succinate/malate CoA ligase beta subunit family. As to quaternary structure, heterotetramer of two alpha and two beta subunits. It depends on Mg(2+) as a cofactor.

The catalysed reaction is succinate + ATP + CoA = succinyl-CoA + ADP + phosphate. The enzyme catalyses GTP + succinate + CoA = succinyl-CoA + GDP + phosphate. The protein operates within carbohydrate metabolism; tricarboxylic acid cycle; succinate from succinyl-CoA (ligase route): step 1/1. In terms of biological role, succinyl-CoA synthetase functions in the citric acid cycle (TCA), coupling the hydrolysis of succinyl-CoA to the synthesis of either ATP or GTP and thus represents the only step of substrate-level phosphorylation in the TCA. The beta subunit provides nucleotide specificity of the enzyme and binds the substrate succinate, while the binding sites for coenzyme A and phosphate are found in the alpha subunit. The protein is Succinate--CoA ligase [ADP-forming] subunit beta of Neisseria meningitidis serogroup B (strain ATCC BAA-335 / MC58).